We begin with the raw amino-acid sequence, 263 residues long: MRDSTPLIHPTAVIDPSATLADDVRVGAFSLIGADVQIGAGTEVGPHCSIHGPTRIGRNNRFIGHAAIGGEPQDKKYAGERTELVIGDGNVIREFVTINRGTGGGGGITVVGNDNWMLAYTHVAHDCHVGNHCVFSNNTTLAGHVTVGDYVIISGFAGAHQFCRIGAHAFLGMGALTNGDVPPFTMVGSESLGRPRGINSEGLKRRGFDAERITAIKRAYRTLYVAGLPLADAKLQLAEQAKSSDDVRGMLEFIEAAERPLLR.

Belongs to the transferase hexapeptide repeat family. LpxA subfamily. As to quaternary structure, homotrimer.

Its subcellular location is the cytoplasm. It catalyses the reaction a (3R)-hydroxyacyl-[ACP] + UDP-N-acetyl-alpha-D-glucosamine = a UDP-3-O-[(3R)-3-hydroxyacyl]-N-acetyl-alpha-D-glucosamine + holo-[ACP]. The protein operates within glycolipid biosynthesis; lipid IV(A) biosynthesis; lipid IV(A) from (3R)-3-hydroxytetradecanoyl-[acyl-carrier-protein] and UDP-N-acetyl-alpha-D-glucosamine: step 1/6. Involved in the biosynthesis of lipid A, a phosphorylated glycolipid that anchors the lipopolysaccharide to the outer membrane of the cell. The sequence is that of Acyl-[acyl-carrier-protein]--UDP-N-acetylglucosamine O-acyltransferase from Xanthomonas axonopodis pv. citri (strain 306).